A 647-amino-acid chain; its full sequence is DNA mismatch repair protein MutL (647 aa).

A disordered region spans residues 393-423; it reads VSLVANKQQPTVKQAKRSADDSDSEHGKLDY. A compositionally biased stretch (basic and acidic residues) spans 409–423; sequence RSADDSDSEHGKLDY.

This sequence belongs to the DNA mismatch repair MutL/HexB family.

In terms of biological role, this protein is involved in the repair of mismatches in DNA. It is required for dam-dependent methyl-directed DNA mismatch repair. May act as a 'molecular matchmaker', a protein that promotes the formation of a stable complex between two or more DNA-binding proteins in an ATP-dependent manner without itself being part of a final effector complex. In Streptococcus thermophilus (strain CNRZ 1066), this protein is DNA mismatch repair protein MutL.